A 270-amino-acid chain; its full sequence is Small ribosomal subunit protein bS1m (270 aa).

A disordered region spans residues 218–250; the sequence is TKQGFKHLGPKPLAYTEKKRETTKQSTKNNVFQ.

The protein belongs to the bacterial ribosomal protein bS1 family.

Its subcellular location is the mitochondrion. This is Small ribosomal subunit protein bS1m (RPS1) from Marchantia polymorpha (Common liverwort).